The chain runs to 321 residues: Probable arabinan endo-1,5-alpha-L-arabinosidase A (321 aa).

The signal sequence occupies residues 1–19 (MYRLLSVASVPLLASLVHG). Asp-34 serves as the catalytic Proton acceptor. Residue Glu-200 is the Proton donor of the active site. Asn-295 carries an N-linked (GlcNAc...) asparagine glycan.

The protein belongs to the glycosyl hydrolase 43 family.

It localises to the secreted. The enzyme catalyses Endohydrolysis of (1-&gt;5)-alpha-arabinofuranosidic linkages in (1-&gt;5)-arabinans.. The protein operates within glycan metabolism; L-arabinan degradation. Its function is as follows. Endo-1,5-alpha-L-arabinanase involved in degradation of pectin. Its preferred substrate is linear 1,5-alpha-L-arabinan. The chain is Probable arabinan endo-1,5-alpha-L-arabinosidase A (abnA) from Aspergillus niger (strain ATCC MYA-4892 / CBS 513.88 / FGSC A1513).